Reading from the N-terminus, the 239-residue chain is MSLMKEMLSVGVHFGHKKAFWNPQMKEYIFGINHGVHIINLEKTVPLFQDAVNFVGKTVANGGKILFVGTKRQAQDIVEAEAKRCGMSFVSHRWLGGMLTNYKTVRQSIKRLAQLEKMREDGTLESLTKKEMLQNIRTIEKLEKVLGGIKEMGGLPDAIVVIDSNKEHIAIQEAQKLGIKVVAIVDTNSNPEGIDYIIPGNDDAVKSISFYMKKFADAVIDAQGLDRAVEAKADEAAQA.

It belongs to the universal ribosomal protein uS2 family.

The sequence is that of Small ribosomal subunit protein uS2 from Francisella tularensis subsp. tularensis (strain FSC 198).